A 349-amino-acid polypeptide reads, in one-letter code: NADH-quinone oxidoreductase subunit H (349 aa).

The next 8 membrane-spanning stretches (helical) occupy residues 20–42, 88–108, 123–143, 167–187, 202–222, 249–269, 284–304, and 325–345; these read WTLIKIVLIVAPMMLGVAYLTYF, GIFIIAPMLAIAPALAAWAVV, LLYIMAITSMGVYGIILSGWA, MGFSLICVLMVSNSLNLVEIV, FLSWNWLPLFPMFLVYLISGV, GMAFAVFFLAEYANMILVSAL, FLPDGILWLFAKMSAILFLFL, and VFVPICLIWLVVVGVWMMSPL.

The protein belongs to the complex I subunit 1 family. In terms of assembly, NDH-1 is composed of 14 different subunits. Subunits NuoA, H, J, K, L, M, N constitute the membrane sector of the complex.

The protein localises to the cell inner membrane. It catalyses the reaction a quinone + NADH + 5 H(+)(in) = a quinol + NAD(+) + 4 H(+)(out). Functionally, NDH-1 shuttles electrons from NADH, via FMN and iron-sulfur (Fe-S) centers, to quinones in the respiratory chain. The immediate electron acceptor for the enzyme in this species is believed to be ubiquinone. Couples the redox reaction to proton translocation (for every two electrons transferred, four hydrogen ions are translocated across the cytoplasmic membrane), and thus conserves the redox energy in a proton gradient. This subunit may bind ubiquinone. The sequence is that of NADH-quinone oxidoreductase subunit H from Dechloromonas aromatica (strain RCB).